The chain runs to 674 residues: Kinesin-like protein KIFC1 (674 aa).

A phosphoserine mark is found at S28, S33, and S35. Residues 66–96 (TSRPRGPLLSTVSQTQGHTAAQKGPKKTGPR) form a disordered region. Over residues 75-84 (STVSQTQGHT) the composition is skewed to polar residues. Residues 146–315 (DLNEELKRYR…QELKGNIRVF (170 aa)) are a coiled coil. The 354-residue stretch at 311 to 664 (NIRVFCRVRP…LRFASKVNQC (354 aa)) folds into the Kinesin motor domain. The disordered stretch occupies residues 327-366 (TPSPGFLVFPPGPAGPSDPPTGLSLSRSDDRRSTLTGAPA). The segment covering 336 to 345 (PPGPAGPSDP) has biased composition (pro residues). T360 is subject to Phosphothreonine. An ATP-binding site is contributed by 411–418 (GQTGSGKT).

It belongs to the TRAFAC class myosin-kinesin ATPase superfamily. Kinesin family. NCD subfamily. Binds NUBP1 and NUBP2. Interacts with PPP1R42. In terms of tissue distribution, highly expressed in 14 dpc embryos, spleen and NIH3T3 cells. Also expressed in testis, brain, lung, kidney and cultured astrocytes. Very low levels in skeletal muscle and heart.

It is found in the nucleus. The protein localises to the cytoplasm. The protein resides in the cytoskeleton. Its subcellular location is the microtubule organizing center. It localises to the centrosome. It is found in the spindle. The protein localises to the early endosome. Minus end-directed microtubule-dependent motor required for bipolar spindle formation. May contribute to movement of early endocytic vesicles. Regulates cilium formation and structure. The protein is Kinesin-like protein KIFC1 of Mus musculus (Mouse).